The chain runs to 241 residues: Venom nerve growth factor (241 aa).

A signal peptide spans 1-18 (MSMLCYTLIIAFLIGIWA). Positions 19–122 (APKSEDNVPL…SLNRNIRAKR (104 aa)) are excised as a propeptide. Intrachain disulfides connect cysteine 136-cysteine 201, cysteine 179-cysteine 229, and cysteine 189-cysteine 231. An N-linked (GlcNAc...) asparagine glycan is attached at asparagine 145.

The protein belongs to the NGF-beta family. In terms of assembly, homodimer; non-covalently linked. As to expression, expressed by the venom gland.

It localises to the secreted. In terms of biological role, nerve growth factor is important for the development and maintenance of the sympathetic and sensory nervous systems. It stimulates division and differentiation of sympathetic and embryonic sensory neurons as well as basal forebrain cholinergic neurons in the brain. Its relevance in the snake venom is not clear. However, it has been shown to inhibit metalloproteinase-dependent proteolysis of platelet glycoprotein Ib alpha, suggesting a metalloproteinase inhibition to prevent metalloprotease autodigestion and/or protection against prey proteases. Binds a lipid between the two protein chains in the homodimer. The lipid-bound form promotes histamine relase from mouse mast cells, contrary to the lipid-free form. The chain is Venom nerve growth factor from Crotalus durissus terrificus (South American rattlesnake).